We begin with the raw amino-acid sequence, 463 residues long: Glutamate--tRNA ligase 2 (463 aa).

The 'HIGH' region signature appears at 11–21; sequence PSPTGYLHIGG. The 'KMSKS' region signature appears at 240–244; the sequence is KLSKR. ATP is bound at residue Lys-243.

The protein belongs to the class-I aminoacyl-tRNA synthetase family. Glutamate--tRNA ligase type 1 subfamily. In terms of assembly, monomer.

Its subcellular location is the cytoplasm. It carries out the reaction tRNA(Glu) + L-glutamate + ATP = L-glutamyl-tRNA(Glu) + AMP + diphosphate. In terms of biological role, catalyzes the attachment of glutamate to tRNA(Glu) in a two-step reaction: glutamate is first activated by ATP to form Glu-AMP and then transferred to the acceptor end of tRNA(Glu). This chain is Glutamate--tRNA ligase 2, found in Campylobacter jejuni subsp. jejuni serotype O:2 (strain ATCC 700819 / NCTC 11168).